The following is a 95-amino-acid chain: Aspartyl/glutamyl-tRNA(Asn/Gln) amidotransferase subunit C (95 aa).

This sequence belongs to the GatC family. As to quaternary structure, heterotrimer of A, B and C subunits.

It catalyses the reaction L-glutamyl-tRNA(Gln) + L-glutamine + ATP + H2O = L-glutaminyl-tRNA(Gln) + L-glutamate + ADP + phosphate + H(+). The enzyme catalyses L-aspartyl-tRNA(Asn) + L-glutamine + ATP + H2O = L-asparaginyl-tRNA(Asn) + L-glutamate + ADP + phosphate + 2 H(+). Allows the formation of correctly charged Asn-tRNA(Asn) or Gln-tRNA(Gln) through the transamidation of misacylated Asp-tRNA(Asn) or Glu-tRNA(Gln) in organisms which lack either or both of asparaginyl-tRNA or glutaminyl-tRNA synthetases. The reaction takes place in the presence of glutamine and ATP through an activated phospho-Asp-tRNA(Asn) or phospho-Glu-tRNA(Gln). This is Aspartyl/glutamyl-tRNA(Asn/Gln) amidotransferase subunit C from Methylobacillus flagellatus (strain ATCC 51484 / DSM 6875 / VKM B-1610 / KT).